Here is a 179-residue protein sequence, read N- to C-terminus: MPKLEAKKGLFQFYPHNLIWLGLSILAIIIDQWTKWIASTHLNYADPVPVLPFLNWTLLHNYGAAFSFLSDAGGWQHYLFTGLAGIVSIIFIFWLMRMPKNAMILPAAIALILGGALGNLIDRMTLGYVVDFIHIYYQNHHFPAFNIADSAITIGTILLLIDTFFLEKQRIQRAEVKHD.

4 helical membrane-spanning segments follow: residues 10 to 30 (LFQF…AIII), 48 to 68 (VPVL…AFSF), 75 to 95 (WQHY…IFWL), and 101 to 121 (NAMI…GNLI). Residues aspartate 131 and aspartate 149 contribute to the active site. A helical transmembrane segment spans residues 141–161 (HFPAFNIADSAITIGTILLLI).

The protein belongs to the peptidase A8 family.

The protein resides in the cell inner membrane. The enzyme catalyses Release of signal peptides from bacterial membrane prolipoproteins. Hydrolyzes -Xaa-Yaa-Zaa-|-(S,diacylglyceryl)Cys-, in which Xaa is hydrophobic (preferably Leu), and Yaa (Ala or Ser) and Zaa (Gly or Ala) have small, neutral side chains.. It participates in protein modification; lipoprotein biosynthesis (signal peptide cleavage). This protein specifically catalyzes the removal of signal peptides from prolipoproteins. This Acinetobacter baylyi (strain ATCC 33305 / BD413 / ADP1) protein is Lipoprotein signal peptidase.